An 88-amino-acid chain; its full sequence is Small ribosomal subunit protein uS19 (88 aa).

Belongs to the universal ribosomal protein uS19 family.

Its function is as follows. Protein S19 forms a complex with S13 that binds strongly to the 16S ribosomal RNA. This Chlamydia felis (strain Fe/C-56) (Chlamydophila felis) protein is Small ribosomal subunit protein uS19.